Consider the following 841-residue polypeptide: Probable alpha-glucuronidase A (841 aa).

Residues 1–19 (MLRLPLVLVWSLWASLTVA) form the signal peptide. N-linked (GlcNAc...) asparagine glycans are attached at residues Asn50, Asn104, Asn223, Asn280, Asn311, Asn344, Asn466, Asn528, Asn577, Asn683, Asn724, and Asn733.

This sequence belongs to the glycosyl hydrolase 67 family.

The protein localises to the secreted. It carries out the reaction an alpha-D-glucuronoside + H2O = D-glucuronate + an alcohol. Functionally, alpha-glucuronidase involved in the hydrolysis of xylan, a major structural heterogeneous polysaccharide found in plant biomass representing the second most abundant polysaccharide in the biosphere, after cellulose. Releases 4-O-methylglucuronic acid from xylan. The polypeptide is Probable alpha-glucuronidase A (aguA) (Aspergillus terreus (strain NIH 2624 / FGSC A1156)).